We begin with the raw amino-acid sequence, 413 residues long: Phosphatidylcholine:ceramide cholinephosphotransferase 1 (413 aa).

In terms of domain architecture, SAM spans 7–70; sequence WSPKKVADWL…LDMIETLKME (64 aa). S8 bears the Phosphoserine mark. 5 consecutive transmembrane segments (helical) span residues 136–156, 184–204, 215–235, 276–296, and 304–324; these read FLAF…ISVV, FSIC…QWLL, FFCI…VTTL, MCGD…YLFI, and LWWY…CILL. Residue H285 is part of the active site. Over 325–413 the chain is Cytoplasmic; sequence AHDHYTVDVV…VKYSRLVNDT (89 aa). Catalysis depends on residues H328 and D332.

Belongs to the sphingomyelin synthase family. Brain, heart, kidney, liver, muscle and stomach.

It localises to the golgi apparatus membrane. The enzyme catalyses an N-acylsphing-4-enine + a 1,2-diacyl-sn-glycero-3-phosphocholine = a sphingomyelin + a 1,2-diacyl-sn-glycerol. It carries out the reaction an N-acylsphinganine + a 1,2-diacyl-sn-glycero-3-phosphocholine = an N-acylsphinganine-1-phosphocholine + a 1,2-diacyl-sn-glycerol. The catalysed reaction is an N-acyl-(4R)-4-hydroxysphinganine + a 1,2-diacyl-sn-glycero-3-phosphocholine = an N-acyl-(4R)-4-hydroxysphinganine-phosphocholine + a 1,2-diacyl-sn-glycerol. It catalyses the reaction 1-(9Z-octadecenoyl)-2-acyl-sn-3-glycerol + a sphingomyelin = a 1-(9Z-octadecenoyl)-2-acyl-sn-glycero-3-phosphocholine + an N-acylsphing-4-enine. The enzyme catalyses N-hexadecanoylsphinganine + a 1,2-diacyl-sn-glycero-3-phosphocholine = N-hexadecanoyl-sphinganine-1-phosphocholine + a 1,2-diacyl-sn-glycerol. It carries out the reaction N-hexadecanoyl-(4R)-hydroxysphinganine + a 1,2-diacyl-sn-glycero-3-phosphocholine = N-hexadecanoyl-(4R)-hydroxysphinganine-phosphocholine + a 1,2-diacyl-sn-glycerol. The catalysed reaction is an N-acylsphing-4-enine + a 1,2-diacyl-sn-glycero-3-phosphoethanolamine = an N-acylsphing-4-enine 1-phosphoethanolamine + a 1,2-diacyl-sn-glycerol. The protein operates within sphingolipid metabolism. Its activity is regulated as follows. Inhibited by bacterial PC-phospholipase C inhibitor D609. Functionally, major sphingomyelin synthase at the Golgi apparatus. Catalyzes the reversible transfer of phosphocholine moiety in sphingomyelin biosynthesis: in the forward reaction transfers phosphocholine head group of phosphatidylcholine (PC) on to ceramide (CER) to form ceramide phosphocholine (sphingomyelin, SM) and diacylglycerol (DAG) as by-product, and in the reverse reaction transfers phosphocholine from SM to DAG to form PC and CER. The direction of the reaction depends on the levels of CER and DAG in Golgi membranes. Converts the newly synthesized CER, that is transported from the endoplasmic reticulum to the trans-Golgi by the Cer transport protein (CERT), to SM. Can form a heteromeric complex with glucosylceramide synthase (GCS) increasing SMS activity and reducing glucosylceramide synthesis, a critical mechanism that controls the metabolic fate of CER in the Golgi. Does not use free phosphorylcholine or CDP-choline as donor. Can also transfer phosphoethanolamine head group of phosphatidylethanolamine (PE) on to CER to form ceramide phosphoethanolamine (CPE). Regulates receptor-mediated signal transduction via mitogenic DAG and proapoptotic CER, as well as via SM, a structural component of membrane rafts that serve as platforms for signal transduction and protein sorting. Plays a role in secretory transport via regulation of DAG pool at the Golgi apparatus and its downstream effects on PRKD1. The polypeptide is Phosphatidylcholine:ceramide cholinephosphotransferase 1 (SGMS1) (Homo sapiens (Human)).